Here is an 864-residue protein sequence, read N- to C-terminus: Probable M1 family aminopeptidase 1 (864 aa).

Substrate is bound by residues E149 and 289–293 (GAMEN). Residue H325 participates in Zn(2+) binding. The active-site Proton acceptor is E326. 2 residues coordinate Zn(2+): H329 and E348.

Belongs to the peptidase M1 family. It depends on Zn(2+) as a cofactor.

This is Probable M1 family aminopeptidase 1 from Encephalitozoon cuniculi (strain GB-M1) (Microsporidian parasite).